The sequence spans 456 residues: UDP-N-acetylmuramate--L-alanine ligase (456 aa).

118 to 124 (GTHGKST) provides a ligand contact to ATP.

It belongs to the MurCDEF family.

It localises to the cytoplasm. It catalyses the reaction UDP-N-acetyl-alpha-D-muramate + L-alanine + ATP = UDP-N-acetyl-alpha-D-muramoyl-L-alanine + ADP + phosphate + H(+). The protein operates within cell wall biogenesis; peptidoglycan biosynthesis. Functionally, cell wall formation. The sequence is that of UDP-N-acetylmuramate--L-alanine ligase from Paenarthrobacter aurescens (strain TC1).